Consider the following 142-residue polypeptide: MQRRQQSGFTLIEIMVVVVILGILAALVVPQVMSRPDQAKVTVAKGDIKAIAAALDMYKLDNFAYPSTQQGLEALVKKPTGNPQPKNWNKDGYLKKLPVDPWGNPYQYLAPGTKGPFDLYSLGADGKEGGSDNDADIGNWDN.

A propeptide spans 1 to 8 (MQRRQQSG) (leader sequence). Phe-9 bears the N-methylphenylalanine mark. The helical transmembrane segment at 9-29 (FTLIEIMVVVVILGILAALVV) threads the bilayer. The interval 121–142 (SLGADGKEGGSDNDADIGNWDN) is disordered.

The protein belongs to the GSP G family. As to quaternary structure, type II secretion system is composed of four main components: the outer membrane complex, the inner membrane complex, the cytoplasmic secretion ATPase and the periplasm-spanning pseudopilus. Forms homomultimers. Interacts with pseudopilin tip ternary complex made of XcpX, XcpU, XcpV and XcpW. Interacts with PilA. In terms of processing, cleaved by the prepilin peptidase. Post-translationally, methylated by prepilin peptidase at the amino group of the N-terminal phenylalanine once the leader sequence is cleaved.

It localises to the cell inner membrane. In terms of biological role, core component of the type II secretion system required for the energy-dependent secretion of extracellular factors such as proteases and toxins from the periplasm. Pseudopilin (pilin-like) protein that polymerizes to form the pseudopilus. Further polymerization triggers pseudopilus growth. Type II pseudopilus confers increased bacterial adhesive capabilities. This chain is Type II secretion system core protein G (xcpT), found in Pseudomonas aeruginosa (strain ATCC 15692 / DSM 22644 / CIP 104116 / JCM 14847 / LMG 12228 / 1C / PRS 101 / PAO1).